A 130-amino-acid polypeptide reads, in one-letter code: Small ribosomal subunit protein uS9 (130 aa).

This sequence belongs to the universal ribosomal protein uS9 family.

This Aliivibrio fischeri (strain MJ11) (Vibrio fischeri) protein is Small ribosomal subunit protein uS9.